The primary structure comprises 305 residues: Tyrosine recombinase XerD (305 aa).

The region spanning 2 to 87 (SQGEAWADAF…AVRQFYRFVL (86 aa)) is the Core-binding (CB) domain. Positions 108-295 (PLPKVLERDE…AGEHLAHIVQ (188 aa)) constitute a Tyr recombinase domain. Residues R149, K173, H247, R250, and H273 contribute to the active site. Residue Y282 is the O-(3'-phospho-DNA)-tyrosine intermediate of the active site.

It belongs to the 'phage' integrase family. XerD subfamily. In terms of assembly, forms a cyclic heterotetrameric complex composed of two molecules of XerC and two molecules of XerD.

It localises to the cytoplasm. Site-specific tyrosine recombinase, which acts by catalyzing the cutting and rejoining of the recombining DNA molecules. The XerC-XerD complex is essential to convert dimers of the bacterial chromosome into monomers to permit their segregation at cell division. It also contributes to the segregational stability of plasmids. This chain is Tyrosine recombinase XerD, found in Caulobacter vibrioides (strain ATCC 19089 / CIP 103742 / CB 15) (Caulobacter crescentus).